Reading from the N-terminus, the 501-residue chain is ATP synthase subunit alpha (501 aa).

169–176 (GDRQTGKT) lines the ATP pocket.

The protein belongs to the ATPase alpha/beta chains family. F-type ATPases have 2 components, CF(1) - the catalytic core - and CF(0) - the membrane proton channel. CF(1) has five subunits: alpha(3), beta(3), gamma(1), delta(1), epsilon(1). CF(0) has three main subunits: a(1), b(2) and c(9-12). The alpha and beta chains form an alternating ring which encloses part of the gamma chain. CF(1) is attached to CF(0) by a central stalk formed by the gamma and epsilon chains, while a peripheral stalk is formed by the delta and b chains.

The protein localises to the cell membrane. It catalyses the reaction ATP + H2O + 4 H(+)(in) = ADP + phosphate + 5 H(+)(out). Functionally, produces ATP from ADP in the presence of a proton gradient across the membrane. The alpha chain is a regulatory subunit. The chain is ATP synthase subunit alpha from Streptococcus pneumoniae serotype 19F (strain G54).